We begin with the raw amino-acid sequence, 195 residues long: Molybdenum cofactor guanylyltransferase (195 aa).

GTP-binding positions include 10 to 12 (LAG), Lys23, Asn51, Asp69, and Asp99. Asp99 contributes to the Mg(2+) binding site.

Belongs to the MobA family. In terms of assembly, monomer. Mg(2+) is required as a cofactor.

The protein localises to the cytoplasm. The enzyme catalyses Mo-molybdopterin + GTP + H(+) = Mo-molybdopterin guanine dinucleotide + diphosphate. Transfers a GMP moiety from GTP to Mo-molybdopterin (Mo-MPT) cofactor (Moco or molybdenum cofactor) to form Mo-molybdopterin guanine dinucleotide (Mo-MGD) cofactor. This is Molybdenum cofactor guanylyltransferase from Shewanella putrefaciens (strain CN-32 / ATCC BAA-453).